A 93-amino-acid polypeptide reads, in one-letter code: YcgL domain-containing protein VSAL_I1068 (93 aa).

The 84-residue stretch at 1–84 (MYCSIYKSSK…PPENLLEKYK (84 aa)) folds into the YcgL domain.

The polypeptide is YcgL domain-containing protein VSAL_I1068 (Aliivibrio salmonicida (strain LFI1238) (Vibrio salmonicida (strain LFI1238))).